A 137-amino-acid polypeptide reads, in one-letter code: Large ribosomal subunit protein uL16 (137 aa).

Belongs to the universal ribosomal protein uL16 family. Part of the 50S ribosomal subunit.

In terms of biological role, binds 23S rRNA and is also seen to make contacts with the A and possibly P site tRNAs. This is Large ribosomal subunit protein uL16 from Rhizobium rhizogenes (strain K84 / ATCC BAA-868) (Agrobacterium radiobacter).